A 288-amino-acid chain; its full sequence is Glycine--tRNA ligase alpha subunit (288 aa).

This sequence belongs to the class-II aminoacyl-tRNA synthetase family. In terms of assembly, tetramer of two alpha and two beta subunits.

The protein localises to the cytoplasm. The catalysed reaction is tRNA(Gly) + glycine + ATP = glycyl-tRNA(Gly) + AMP + diphosphate. This chain is Glycine--tRNA ligase alpha subunit, found in Rickettsia canadensis (strain McKiel).